Reading from the N-terminus, the 106-residue chain is uncharacterized protein (106 aa).

The protein to the N-terminal of E.carotovora exoenzyme regulation regulon ORF1. The C-terminal part is colinear with YqcB. To E.coli YqcC.

This is an uncharacterized protein from Haemophilus influenzae (strain ATCC 51907 / DSM 11121 / KW20 / Rd).